Here is a 119-residue protein sequence, read N- to C-terminus: Large ribosomal subunit protein bL20 (119 aa).

It belongs to the bacterial ribosomal protein bL20 family.

Its function is as follows. Binds directly to 23S ribosomal RNA and is necessary for the in vitro assembly process of the 50S ribosomal subunit. It is not involved in the protein synthesizing functions of that subunit. This chain is Large ribosomal subunit protein bL20, found in Bordetella avium (strain 197N).